The chain runs to 249 residues: Indole-3-glycerol phosphate synthase (249 aa).

Belongs to the TrpC family.

It carries out the reaction 1-(2-carboxyphenylamino)-1-deoxy-D-ribulose 5-phosphate + H(+) = (1S,2R)-1-C-(indol-3-yl)glycerol 3-phosphate + CO2 + H2O. The protein operates within amino-acid biosynthesis; L-tryptophan biosynthesis; L-tryptophan from chorismate: step 4/5. The chain is Indole-3-glycerol phosphate synthase from Pyrobaculum arsenaticum (strain DSM 13514 / JCM 11321 / PZ6).